A 137-amino-acid chain; its full sequence is Protein cornichon homolog 3 (137 aa).

3 helical membrane-spanning segments follow: residues 8-28 (IISF…LISL), 54-74 (ILQG…MALL), and 113-133 (LAYI…STLD).

This sequence belongs to the cornichon family.

It is found in the membrane. The polypeptide is Protein cornichon homolog 3 (Arabidopsis thaliana (Mouse-ear cress)).